The sequence spans 355 residues: Methylthioribose-1-phosphate isomerase (355 aa).

Residues 50–52 (RGA), Arg-93, and Gln-198 contribute to the substrate site. Residue Asp-239 is the Proton donor of the active site. Residue 249-250 (NK) coordinates substrate.

This sequence belongs to the eIF-2B alpha/beta/delta subunits family. MtnA subfamily. As to quaternary structure, homodimer.

The catalysed reaction is 5-(methylsulfanyl)-alpha-D-ribose 1-phosphate = 5-(methylsulfanyl)-D-ribulose 1-phosphate. It functions in the pathway amino-acid biosynthesis; L-methionine biosynthesis via salvage pathway; L-methionine from S-methyl-5-thio-alpha-D-ribose 1-phosphate: step 1/6. Catalyzes the interconversion of methylthioribose-1-phosphate (MTR-1-P) into methylthioribulose-1-phosphate (MTRu-1-P). In Geobacillus kaustophilus (strain HTA426), this protein is Methylthioribose-1-phosphate isomerase.